The sequence spans 708 residues: Vertnin (708 aa).

Disordered stretches follow at residues 473-499 (PWKG…FLPP) and 561-636 (APAL…PVAE). Residues 568 to 582 (GLREAKEKQEKEAGR) show a composition bias toward basic and acidic residues.

This sequence belongs to the vertnin family.

The chain is Vertnin (VRTN) from Ailuropoda melanoleuca (Giant panda).